A 254-amino-acid chain; its full sequence is Leucyl/phenylalanyl-tRNA--protein transferase (254 aa).

The protein belongs to the L/F-transferase family.

It localises to the cytoplasm. The enzyme catalyses N-terminal L-lysyl-[protein] + L-leucyl-tRNA(Leu) = N-terminal L-leucyl-L-lysyl-[protein] + tRNA(Leu) + H(+). The catalysed reaction is N-terminal L-arginyl-[protein] + L-leucyl-tRNA(Leu) = N-terminal L-leucyl-L-arginyl-[protein] + tRNA(Leu) + H(+). It carries out the reaction L-phenylalanyl-tRNA(Phe) + an N-terminal L-alpha-aminoacyl-[protein] = an N-terminal L-phenylalanyl-L-alpha-aminoacyl-[protein] + tRNA(Phe). In terms of biological role, functions in the N-end rule pathway of protein degradation where it conjugates Leu, Phe and, less efficiently, Met from aminoacyl-tRNAs to the N-termini of proteins containing an N-terminal arginine or lysine. The chain is Leucyl/phenylalanyl-tRNA--protein transferase from Burkholderia multivorans (strain ATCC 17616 / 249).